The sequence spans 581 residues: Proline--tRNA ligase (581 aa).

It belongs to the class-II aminoacyl-tRNA synthetase family. ProS type 1 subfamily. Homodimer.

Its subcellular location is the cytoplasm. It catalyses the reaction tRNA(Pro) + L-proline + ATP = L-prolyl-tRNA(Pro) + AMP + diphosphate. Functionally, catalyzes the attachment of proline to tRNA(Pro) in a two-step reaction: proline is first activated by ATP to form Pro-AMP and then transferred to the acceptor end of tRNA(Pro). As ProRS can inadvertently accommodate and process non-cognate amino acids such as alanine and cysteine, to avoid such errors it has two additional distinct editing activities against alanine. One activity is designated as 'pretransfer' editing and involves the tRNA(Pro)-independent hydrolysis of activated Ala-AMP. The other activity is designated 'posttransfer' editing and involves deacylation of mischarged Ala-tRNA(Pro). The misacylated Cys-tRNA(Pro) is not edited by ProRS. The polypeptide is Proline--tRNA ligase (Variovorax paradoxus (strain S110)).